We begin with the raw amino-acid sequence, 209 residues long: Large ribosomal subunit protein uL3 (209 aa).

Residues 128-163 (FGGGSRTHGQSDRLRAPGSVGGSSDPSRTFRGTRMA) are disordered.

Belongs to the universal ribosomal protein uL3 family. As to quaternary structure, part of the 50S ribosomal subunit. Forms a cluster with proteins L14 and L19.

In terms of biological role, one of the primary rRNA binding proteins, it binds directly near the 3'-end of the 23S rRNA, where it nucleates assembly of the 50S subunit. This Chlorobium phaeobacteroides (strain DSM 266 / SMG 266 / 2430) protein is Large ribosomal subunit protein uL3.